Here is a 462-residue protein sequence, read N- to C-terminus: Kinetochore protein Nuf2-B (462 aa).

Positions S143–Q462 form a coiled coil. The disordered stretch occupies residues E236–K259. Positions P248–K259 are enriched in basic and acidic residues.

This sequence belongs to the NUF2 family. In terms of assembly, component of the NDC80 complex, which is composed of ndc80, cdca1, spbc24 and spbc25. The NDC80 complex interacts with mis12 and zwint.

Its subcellular location is the nucleus. It localises to the chromosome. The protein resides in the centromere. The protein localises to the kinetochore. Its function is as follows. Acts as a component of the essential kinetochore-associated NDC80 complex, which is required for chromosome segregation and spindle checkpoint activity. Required for kinetochore integrity and the organization of stable microtubule binding sites in the outer plate of the kinetochore. The NDC80 complex synergistically enhances the affinity of the SKA1 complex for microtubules and may allow the NDC80 complex to track depolymerizing microtubules. This Xenopus laevis (African clawed frog) protein is Kinetochore protein Nuf2-B (nuf2-b).